Consider the following 244-residue polypeptide: Guanine nucleotide exchange factor rei-1 (244 aa).

2 coiled-coil regions span residues 6 to 39 (DQLI…KKQF) and 81 to 144 (VQQA…KAEK). The disordered stretch occupies residues 221–244 (DQIHQERSSQSSLAPSSDAESDSS). Residues 228-238 (SSQSSLAPSSD) are compositionally biased toward low complexity.

This sequence belongs to the SH3BP5 family. In terms of assembly, homodimer, tetramer and multimer. Interacts with rab-11.1. Binds preferentially to the GDP-bound form of rab-11.1. In terms of tissue distribution, expressed in germ cells.

Its subcellular location is the cytoplasmic granule. It localises to the golgi apparatus membrane. Its function is as follows. Guanine nucleotide exchange factor for Rab GTPase Rab-11.1. Spatially and temporally regulates the distribution of Rab-11.1 to target membranes during embryogenesis. Plays a role in cytokinesis, probably by targeting rab-11.1 to the cleavage furrows. In Caenorhabditis elegans, this protein is Guanine nucleotide exchange factor rei-1.